The chain runs to 175 residues: uncharacterized protein (175 aa).

The next 5 helical transmembrane spans lie at 25 to 45 (MIAI…TTIS), 46 to 66 (ATGP…FFLL), 97 to 117 (FAGW…LTAV), 124 to 144 (WLPG…LTLL), and 155 to 175 (TEFW…VTGI).

This sequence belongs to the amino acid-polyamine-organocation (APC) superfamily.

It is found in the cell membrane. This is an uncharacterized protein from Lactobacillus delbrueckii subsp. lactis.